The sequence spans 336 residues: Probable G-protein coupled receptor 160 (336 aa).

The Extracellular portion of the chain corresponds to methionine 1 to serine 21. Asparagine 8 carries an N-linked (GlcNAc...) asparagine glycan. The chain crosses the membrane as a helical span at residues leucine 22 to isoleucine 42. The Cytoplasmic segment spans residues leucine 43–glutamate 56. The chain crosses the membrane as a helical span at residues tyrosine 57–threonine 77. Residues tyrosine 78–cysteine 95 are Extracellular-facing. Residues leucine 96 to alanine 116 traverse the membrane as a helical segment. Topologically, residues cysteine 117 to lysine 136 are cytoplasmic. A helical membrane pass occupies residues leucine 137 to aspartate 157. Over proline 158–leucine 187 the chain is Extracellular. Residues serine 188–isoleucine 208 form a helical membrane-spanning segment. Over glutamine 209 to arginine 243 the chain is Cytoplasmic. Residues leucine 244–serine 264 form a helical membrane-spanning segment. Residues leucine 265–tyrosine 272 lie on the Extracellular side of the membrane. The chain crosses the membrane as a helical span at residues isoleucine 273–tryptophan 293. Over phenylalanine 294–cysteine 336 the chain is Cytoplasmic.

It belongs to the G-protein coupled receptor 1 family.

It is found in the cell membrane. Orphan receptor. The sequence is that of Probable G-protein coupled receptor 160 (Gpr160) from Rattus norvegicus (Rat).